Reading from the N-terminus, the 187-residue chain is DNA-3-methyladenine glycosylase 1 (187 aa).

Positions 4, 17, 175, and 179 each coordinate Zn(2+).

It catalyses the reaction Hydrolysis of alkylated DNA, releasing 3-methyladenine.. Activity is controlled by product inhibition. Hydrolysis of the deoxyribose N-glycosidic bond to excise 3-methyladenine from the damaged DNA polymer formed by alkylation lesions. This chain is DNA-3-methyladenine glycosylase 1, found in Escherichia coli (strain K12).